Consider the following 148-residue polypeptide: Large-conductance mechanosensitive channel (148 aa).

The next 2 helical transmembrane spans lie at 9–29 (AFAV…GAAF) and 79–99 (IQTV…VKAI).

Belongs to the MscL family. As to quaternary structure, homopentamer.

It localises to the cell inner membrane. Functionally, channel that opens in response to stretch forces in the membrane lipid bilayer. May participate in the regulation of osmotic pressure changes within the cell. The chain is Large-conductance mechanosensitive channel from Pseudomonas savastanoi pv. phaseolicola (strain 1448A / Race 6) (Pseudomonas syringae pv. phaseolicola (strain 1448A / Race 6)).